Here is a 149-residue protein sequence, read N- to C-terminus: Putative pre-16S rRNA nuclease (149 aa).

It belongs to the YqgF nuclease family.

The protein resides in the cytoplasm. In terms of biological role, could be a nuclease involved in processing of the 5'-end of pre-16S rRNA. This is Putative pre-16S rRNA nuclease from Burkholderia vietnamiensis (strain G4 / LMG 22486) (Burkholderia cepacia (strain R1808)).